The primary structure comprises 289 residues: MYFLTPILVAILCILVVWIFKNADRSMEKKKGEARTRAEARPWVDEDLKDSSDLHQAEEDADEWQESEENVEHIPFSHTHYPEKEMVKRSREFYELLNKRRSVRFISNEQVPMEVIDNVIRTAGTAPSGAHTEPWTFVVVKDPDVKHKIRKIIEGEEEINYMKRMGHRWVTDLKKLRTNWIKEYLDTAPILILIFKQVHGFVANGKKKVHYYNEISVSIACGILLAALQNAGLVTVTTTPLNCGPRLRVLLGRPAHEKLLMLLPVGYPSKEAMVPDLKRKPLDQIMVMV.

A helical membrane pass occupies residues 1 to 21; the sequence is MYFLTPILVAILCILVVWIFK. Over residues 47 to 58 the composition is skewed to basic and acidic residues; it reads DLKDSSDLHQAE. Positions 47–69 are disordered; sequence DLKDSSDLHQAEEDADEWQESEE. A compositionally biased stretch (acidic residues) spans 59 to 69; sequence EDADEWQESEE. FMN-binding positions include 100–104, Ser-128, and 128–129; these read RRSVR and SG. 3,5-diiodo-L-tyrosine-binding residues include Ala-130, Glu-157, Tyr-161, and Lys-182. Positions 130, 157, 161, and 182 each coordinate 3-iodo-L-tyrosine. Residues 237 to 239 and Arg-279 each bind FMN; that span reads TTT.

The protein belongs to the nitroreductase family. As to quaternary structure, homodimer. FMN is required as a cofactor.

It localises to the cell membrane. The protein localises to the cytoplasmic vesicle membrane. It catalyses the reaction 2 iodide + L-tyrosine + 2 NADP(+) = 3,5-diiodo-L-tyrosine + 2 NADPH + H(+). The enzyme catalyses iodide + L-tyrosine + NADP(+) = 3-iodo-L-tyrosine + NADPH. The catalysed reaction is 3-iodo-L-tyrosine + iodide + NADP(+) = 3,5-diiodo-L-tyrosine + NADPH + H(+). It carries out the reaction L-tyrosine + chloride + NADP(+) = 3-chloro-L-tyrosine + NADPH. It catalyses the reaction bromide + L-tyrosine + NADP(+) = 3-bromo-L-tyrosine + NADPH. Functionally, catalyzes the dehalogenation of halotyrosines such as 3-bromo-L-tyrosine, 3-chloro-L-tyrosine, 3-iodo-L-tyrosine and 3,5-diiodo-L-tyrosine. During thyroid hormone biosynthesis, facilitates iodide salvage by catalysing the oxidative NADPH-dependent deiodination of the halogenated by-products of thyroid hormone production, monoiodotyrosine (L-MIT) and diiodotyrosine (L-DIT). The scavanged iodide can then reenter the hormone-producing pathways. Acts more efficiently on 3-iodo-L-tyrosine than 3,5-diiodo-L-tyrosine. This is Iodotyrosine deiodinase 1 (IYD) from Pongo abelii (Sumatran orangutan).